Here is a 181-residue protein sequence, read N- to C-terminus: Adenylyl-sulfate kinase (181 aa).

12–19 (GLSGAGKT) provides a ligand contact to ATP. The active-site Phosphoserine intermediate is serine 86.

Belongs to the APS kinase family.

The catalysed reaction is adenosine 5'-phosphosulfate + ATP = 3'-phosphoadenylyl sulfate + ADP + H(+). It participates in sulfur metabolism; hydrogen sulfide biosynthesis; sulfite from sulfate: step 2/3. Catalyzes the synthesis of activated sulfate. The sequence is that of Adenylyl-sulfate kinase from Rippkaea orientalis (strain PCC 8801 / RF-1) (Cyanothece sp. (strain PCC 8801)).